The sequence spans 279 residues: Lectin 9 (279 aa).

A signal peptide spans 1 to 23 (MALSSALIKIFITFLFLQNHVNS). Asparagine 116, asparagine 139, asparagine 235, and asparagine 272 each carry an N-linked (GlcNAc...) asparagine glycan.

Belongs to the leguminous lectin family.

In terms of biological role, may be involved in arbuscular mycorrhizal (AM) symbiosis with AM fungi. In Medicago truncatula (Barrel medic), this protein is Lectin 9.